The primary structure comprises 637 residues: Sphingomyelin phosphodiesterase B (637 aa).

Positions 1 to 20 are cleaved as a signal peptide; it reads MKVKAPILLLFVFLINFCFS. N-linked (GlcNAc...) asparagine glycosylation occurs at Asn-73. Residues 73 to 155 form the Saposin B-type domain; sequence NGTKCDICKF…GFVGFCPYVP (83 aa). 3 cysteine pairs are disulfide-bonded: Cys-77–Cys-151, Cys-80–Cys-145, and Cys-108–Cys-119. N-linked (GlcNAc...) asparagine glycosylation is found at Asn-128 and Asn-157. Positions 191 and 193 each coordinate Zn(2+). A disulfide bond links Cys-212 and Cys-233. Asp-263 is a binding site for Zn(2+). The N-linked (GlcNAc...) asparagine glycan is linked to Asn-279. Residue Asn-304 coordinates Zn(2+). The N-linked (GlcNAc...) asparagine glycan is linked to Asn-377. Zn(2+)-binding residues include His-407, His-441, and His-443. 2 N-linked (GlcNAc...) asparagine glycosylation sites follow: Asn-523 and Asn-546. Cys-582 and Cys-595 are disulfide-bonded. N-linked (GlcNAc...) asparagine glycosylation occurs at Asn-606.

It belongs to the acid sphingomyelinase family. The cofactor is Zn(2+).

It localises to the secreted. Functionally, converts sphingomyelin to ceramide. This chain is Sphingomyelin phosphodiesterase B (sgmB), found in Dictyostelium discoideum (Social amoeba).